Here is a 321-residue protein sequence, read N- to C-terminus: Olfactory receptor 3A3 (321 aa).

The Extracellular segment spans residues 1–34 (MSLQKLMEPEAGTNRTAVAEFILLGLVQTEEMQP). Residue asparagine 14 is glycosylated (N-linked (GlcNAc...) asparagine). Residues 35 to 58 (VVFVLLLFAYLVTTGGNLSILAAV) form a helical membrane-spanning segment. At 59–66 (LVEPKLHA) the chain is on the cytoplasmic side. A helical membrane pass occupies residues 67–88 (PMYFFLGNLSVLDVGCITVTVP). At 89–109 (AMLGRLLSHKSTISYDACLSQ) the chain is on the extracellular side. Residues cysteine 106 and cysteine 198 are joined by a disulfide bond. The chain crosses the membrane as a helical span at residues 110–129 (LFFFHLLAGMDCFLLTAMAY). Over 130–149 (DRLLAICQPLTYSTRMSQTV) the chain is Cytoplasmic. A helical membrane pass occupies residues 150–167 (QRMLVAASWACAFTNALT). The Extracellular portion of the chain corresponds to 168–205 (HTVAMSTLNFCGPNEVNHFYCDLPQLFQLSCSSTQLNE). The chain crosses the membrane as a helical span at residues 206–228 (LLLFVAAAFMAVAPLVFISVSYA). Residues 229 to 245 (HVVAAVLQIRSAEGRKK) lie on the Cytoplasmic side of the membrane. The helical transmembrane segment at 246 to 268 (AFSTCGSHLTVVGIFYGTGVFSY) threads the bilayer. Residues 269 to 281 (MRLGSVESSDKDK) are Extracellular-facing. A helical membrane pass occupies residues 282 to 301 (GVGVFMTVINPMLNPLIYSL). Over 302–321 (RNTDVQGALCQLLVGKRSLT) the chain is Cytoplasmic.

The protein belongs to the G-protein coupled receptor 1 family.

The protein localises to the cell membrane. Functionally, odorant receptor. The polypeptide is Olfactory receptor 3A3 (OR3A3) (Homo sapiens (Human)).